The chain runs to 238 residues: Large ribosomal subunit protein uL2 (238 aa).

The disordered stretch occupies residues 203-223 (GGGAWKHPGKPTTVSRNAPPG).

It belongs to the universal ribosomal protein uL2 family. As to quaternary structure, part of the 50S ribosomal subunit. Forms a bridge to the 30S subunit in the 70S ribosome.

One of the primary rRNA binding proteins. Required for association of the 30S and 50S subunits to form the 70S ribosome, for tRNA binding and peptide bond formation. It has been suggested to have peptidyltransferase activity; this is somewhat controversial. Makes several contacts with the 16S rRNA in the 70S ribosome. The sequence is that of Large ribosomal subunit protein uL2 from Methanosarcina barkeri (strain Fusaro / DSM 804).